The chain runs to 453 residues: MREVISIHVGQAGIQIGNACWELFCLEHGIQPDGQMPSDKTIGGGDDAFNTFFSETGAGKHVPRCVFLDLEPTVVDEVRTGTYRHLFHPEQLISGKEDAANNFARGHYTIGKEIVDLSLDRIRKLADNCTGLQGFLMFNAVGGGTGSGLGCLLLERLSVDYGKKSKLNFCSWPSPQVSTAVVEPYNSVLSTHSLLEHTDVAVMLDNEAIYDICRRNLDIERPTYTNLNRLIAQVISSLTASLRFDGALNVDVTEFQTNLVPYPRIHFMLSSYAPIISAEKAYHEQLSVAEITNSAFEPASMMAKCDPRHGKYMACCLMYRGDVVPKDVNAAVATIKTKRTIQFVDWCPTGFKCGINYQPPTVVPGGDLAKVMRAVCMISNSTAIAEVFSRMDHKFDLMYAKRAFVHWYVGEGMEEGEFSEAREDLAALEKDYEEVGIETAEGEGEEEGYGDEY.

Residue Gln-11 coordinates GTP. At Lys-40 the chain carries N6-acetyllysine. Glu-71, Gly-144, Thr-145, Thr-179, Asn-206, and Asn-228 together coordinate GTP. Glu-71 is a Mg(2+) binding site. Glu-254 is an active-site residue.

Belongs to the tubulin family. As to quaternary structure, dimer of alpha and beta chains. A typical microtubule is a hollow water-filled tube with an outer diameter of 25 nm and an inner diameter of 15 nM. Alpha-beta heterodimers associate head-to-tail to form protofilaments running lengthwise along the microtubule wall with the beta-tubulin subunit facing the microtubule plus end conferring a structural polarity. Microtubules usually have 13 protofilaments but different protofilament numbers can be found in some organisms and specialized cells. Mg(2+) serves as cofactor. Undergoes a tyrosination/detyrosination cycle, the cyclic removal and re-addition of a C-terminal tyrosine residue by the enzymes tubulin tyrosine carboxypeptidase (TTCP) and tubulin tyrosine ligase (TTL), respectively. Post-translationally, acetylation of alpha chains at Lys-40 stabilizes microtubules and affects affinity and processivity of microtubule motors. This modification has a role in multiple cellular functions, ranging from cell motility, cell cycle progression or cell differentiation to intracellular trafficking and signaling.

It localises to the cytoplasm. Its subcellular location is the cytoskeleton. The enzyme catalyses GTP + H2O = GDP + phosphate + H(+). Its function is as follows. Tubulin is the major constituent of microtubules, a cylinder consisting of laterally associated linear protofilaments composed of alpha- and beta-tubulin heterodimers. Microtubules grow by the addition of GTP-tubulin dimers to the microtubule end, where a stabilizing cap forms. Below the cap, tubulin dimers are in GDP-bound state, owing to GTPase activity of alpha-tubulin. This is Tubulin alpha chain (TUBA) from Neospora caninum (Coccidian parasite).